Consider the following 743-residue polypeptide: Merozoite surface protein 9 (743 aa).

The signal sequence occupies residues 1-23 (MMNMKIVLFSLLLFVIRWNIISC). The interval 77 to 235 (KELLKEKQYT…VNDEDDVNDE (159 aa)) is interaction with MSP1 and host SLC4A1/Band 3. Disordered stretches follow at residues 202–282 (KSQG…ATAY), 459–487 (DNQA…PTED), 512–540 (NNTP…ENFD), and 666–743 (VDAL…EESK). The segment covering 211-224 (SQNQNENNDNQKYQ) has biased composition (polar residues). Tandem repeats lie at residues 226-231 (VNDEDD), 232-237 (VNDEED), 238-243 (TNDDED), 244-249 (TNDEED), 250-255 (TNDDED), 256-261 (TNDDED), 262-267 (TNDEED), and 268-273 (TNDEED). The segment at 226-273 (VNDEDDVNDEEDTNDDEDTNDEEDTNDDEDTNDDEDTNDEEDTNDEED) is 8 X 6 AA tandem repeats of [VT]-N-D-[ED]-[ED]-D. Over residues 226–274 (VNDEDDVNDEEDTNDDEDTNDEEDTNDDEDTNDDEDTNDEEDTNDEEDH) the composition is skewed to acidic residues. An interaction with MSP1 and host SLC4A1/Band 3 region spans residues 364–528 (LKDNLINYEF…PPTQSKKKNK (165 aa)). Residues 459 to 473 (DNQAVDTKSMEEPKV) show a composition bias toward basic and acidic residues. Residues 512-521 (NNTPNVVPPT) show a composition bias toward low complexity. Residues 644–732 (NQETEEEMEK…EEQEEEEEEI (89 aa)) are a coiled coil. Over residues 672–722 (KNKEEEEKEKEKEKEKEEKEKEEKEKEEKEKEKEEKEKEKEEKEEEKKEKE) the composition is skewed to basic and acidic residues. The segment covering 723-733 (EEQEEEEEEIV) has biased composition (acidic residues).

The protein belongs to the plasmodium ABRA family. Forms a complex composed of MSP1, MSP6, MSP7, MSP9 and MSP3; within the complex, MSP6 and MSP9 mediate the binding to the host erythrocyte. Interacts with MSP1 subunits p19 and p42; the interaction is direct. Interacts with host SLC4A1/Band 3 protein (via the 5ABC region). MSP1 subunits p19 or p42, and MSP9 form a co-ligand complex that interacts with host SLC4A1/Band 3 protein. In terms of processing, not glycosylated.

Its subcellular location is the cell membrane. It localises to the parasitophorous vacuole lumen. The protein localises to the secreted. Its function is as follows. During the asexual blood stage, involved in the sialic acid-independent (SAID) merozoite invasion of host erythrocytes by binding to host SLC4A1/Band 3 protein on the surface of the host erythrocyte. This is Merozoite surface protein 9 from Plasmodium falciparum (isolate Camp / Malaysia).